Here is a 155-residue protein sequence, read N- to C-terminus: Xanthine-guanine phosphoribosyltransferase (155 aa).

5-phospho-alpha-D-ribose 1-diphosphate is bound by residues 37 to 38 (RG), Arg-69, and 90 to 98 (DDLVDTGGT). Arg-69 is a GMP binding site. Asp-91 is a binding site for Mg(2+). Guanine is bound by residues Asp-94 and Ile-137. Xanthine contacts are provided by Asp-94 and Ile-137. GMP is bound by residues 94-98 (DTGGT) and 136-137 (WI).

It belongs to the purine/pyrimidine phosphoribosyltransferase family. XGPT subfamily. Homotetramer. The cofactor is Mg(2+).

The protein localises to the cell inner membrane. It carries out the reaction GMP + diphosphate = guanine + 5-phospho-alpha-D-ribose 1-diphosphate. The enzyme catalyses XMP + diphosphate = xanthine + 5-phospho-alpha-D-ribose 1-diphosphate. It catalyses the reaction IMP + diphosphate = hypoxanthine + 5-phospho-alpha-D-ribose 1-diphosphate. It participates in purine metabolism; GMP biosynthesis via salvage pathway; GMP from guanine: step 1/1. The protein operates within purine metabolism; XMP biosynthesis via salvage pathway; XMP from xanthine: step 1/1. In terms of biological role, purine salvage pathway enzyme that catalyzes the transfer of the ribosyl-5-phosphate group from 5-phospho-alpha-D-ribose 1-diphosphate (PRPP) to the N9 position of the 6-oxopurines guanine and xanthine to form the corresponding ribonucleotides GMP (guanosine 5'-monophosphate) and XMP (xanthosine 5'-monophosphate), with the release of PPi. To a lesser extent, also acts on hypoxanthine. The chain is Xanthine-guanine phosphoribosyltransferase from Aeromonas salmonicida (strain A449).